Here is a 233-residue protein sequence, read N- to C-terminus: 2-C-methyl-D-erythritol 4-phosphate cytidylyltransferase (233 aa).

The protein belongs to the IspD/TarI cytidylyltransferase family. IspD subfamily.

It catalyses the reaction 2-C-methyl-D-erythritol 4-phosphate + CTP + H(+) = 4-CDP-2-C-methyl-D-erythritol + diphosphate. The protein operates within isoprenoid biosynthesis; isopentenyl diphosphate biosynthesis via DXP pathway; isopentenyl diphosphate from 1-deoxy-D-xylulose 5-phosphate: step 2/6. Functionally, catalyzes the formation of 4-diphosphocytidyl-2-C-methyl-D-erythritol from CTP and 2-C-methyl-D-erythritol 4-phosphate (MEP). The polypeptide is 2-C-methyl-D-erythritol 4-phosphate cytidylyltransferase (Lachnoclostridium phytofermentans (strain ATCC 700394 / DSM 18823 / ISDg) (Clostridium phytofermentans)).